The chain runs to 267 residues: Phosphonoacetaldehyde hydrolase (267 aa).

Residue Asp10 is the Nucleophile of the active site. Asp10 and Ala12 together coordinate Mg(2+). The active-site Schiff-base intermediate with substrate is the Lys51. Residue Asp184 participates in Mg(2+) binding.

It belongs to the HAD-like hydrolase superfamily. PhnX family. Homodimer. The cofactor is Mg(2+).

The enzyme catalyses phosphonoacetaldehyde + H2O = acetaldehyde + phosphate + H(+). Involved in phosphonate degradation. In Paraburkholderia phytofirmans (strain DSM 17436 / LMG 22146 / PsJN) (Burkholderia phytofirmans), this protein is Phosphonoacetaldehyde hydrolase.